Here is a 239-residue protein sequence, read N- to C-terminus: Mediator of RNA polymerase II transcription subunit 7 (239 aa).

Disordered stretches follow at residues 1 to 21 (MSSL…PPPP) and 43 to 66 (LFVN…DMSV). A compositionally biased stretch (basic and acidic residues) spans 46-66 (NDEKGKTKGKEKKSDDRDMSV).

The protein belongs to the Mediator complex subunit 7 family. As to quaternary structure, component of the Mediator complex.

It is found in the nucleus. In terms of biological role, component of the Mediator complex, a coactivator involved in the regulated transcription of nearly all RNA polymerase II-dependent genes. Mediator functions as a bridge to convey information from gene-specific regulatory proteins to the basal RNA polymerase II transcription machinery. Mediator is recruited to promoters by direct interactions with regulatory proteins and serves as a scaffold for the assembly of a functional preinitiation complex with RNA polymerase II and the general transcription factors. The chain is Mediator of RNA polymerase II transcription subunit 7 (MED7) from Cryptococcus neoformans var. neoformans serotype D (strain B-3501A) (Filobasidiella neoformans).